The sequence spans 99 residues: DNA-directed RNA polymerase subunit Rpo11 (99 aa).

The protein belongs to the archaeal Rpo11/eukaryotic RPB11/RPC19 RNA polymerase subunit family. Part of the RNA polymerase complex.

The protein localises to the cytoplasm. The enzyme catalyses RNA(n) + a ribonucleoside 5'-triphosphate = RNA(n+1) + diphosphate. In terms of biological role, DNA-dependent RNA polymerase (RNAP) catalyzes the transcription of DNA into RNA using the four ribonucleoside triphosphates as substrates. The protein is DNA-directed RNA polymerase subunit Rpo11 of Aeropyrum pernix (strain ATCC 700893 / DSM 11879 / JCM 9820 / NBRC 100138 / K1).